The following is a 229-amino-acid chain: 3-isopropylmalate dehydratase small subunit (229 aa).

A disordered region spans residues 198 to 229 (LPVKREPEQPIESAREGEYPDWQGPLADRGII). The segment covering 200 to 215 (VKREPEQPIESAREGE) has biased composition (basic and acidic residues).

This sequence belongs to the LeuD family. LeuD type 1 subfamily. In terms of assembly, heterodimer of LeuC and LeuD.

It catalyses the reaction (2R,3S)-3-isopropylmalate = (2S)-2-isopropylmalate. It functions in the pathway amino-acid biosynthesis; L-leucine biosynthesis; L-leucine from 3-methyl-2-oxobutanoate: step 2/4. Functionally, catalyzes the isomerization between 2-isopropylmalate and 3-isopropylmalate, via the formation of 2-isopropylmaleate. The polypeptide is 3-isopropylmalate dehydratase small subunit (Bifidobacterium adolescentis (strain ATCC 15703 / DSM 20083 / NCTC 11814 / E194a)).